A 280-amino-acid chain; its full sequence is Putative S-adenosyl-L-methionine-dependent methyltransferase FRAAL3836 (280 aa).

S-adenosyl-L-methionine contacts are provided by residues aspartate 121 and 150–151 (DL).

Belongs to the UPF0677 family.

In terms of biological role, exhibits S-adenosyl-L-methionine-dependent methyltransferase activity. In Frankia alni (strain DSM 45986 / CECT 9034 / ACN14a), this protein is Putative S-adenosyl-L-methionine-dependent methyltransferase FRAAL3836.